We begin with the raw amino-acid sequence, 224 residues long: Endoplasmic reticulum vesicle protein 25 (224 aa).

The first 25 residues, 1–25 (MIPPRSLGSTAALLLVLLFTTLASA), serve as a signal peptide directing secretion. At 26 to 190 (IKFDLPSNAH…ADTNLSTNMR (165 aa)) the chain is on the lumenal side. The GOLD domain maps to 38–131 (TKCIWNYALS…IPVVTIDLDV (94 aa)). The helical transmembrane segment at 191–211 (VTNFAILTLIALIALGVWQVF) threads the bilayer. The Cytoplasmic portion of the chain corresponds to 212 to 224 (HLRGFFKRKYLID).

The protein belongs to the EMP24/GP25L family.

The protein resides in the endoplasmic reticulum membrane. The protein localises to the golgi apparatus membrane. Constituent of COPII-coated endoplasmic reticulum-derived transport vesicles. Required for efficient transport of a subset of secretory proteins to the Golgi. Facilitates retrograde transport from the Golgi to the endoplasmic reticulum. The protein is Endoplasmic reticulum vesicle protein 25 (ERV25) of Mycosarcoma maydis (Corn smut fungus).